Here is a 125-residue protein sequence, read N- to C-terminus: Large ribosomal subunit protein bL12 (125 aa).

It belongs to the bacterial ribosomal protein bL12 family. In terms of assembly, homodimer. Part of the ribosomal stalk of the 50S ribosomal subunit. Forms a multimeric L10(L12)X complex, where L10 forms an elongated spine to which 2 to 4 L12 dimers bind in a sequential fashion. Binds GTP-bound translation factors.

In terms of biological role, forms part of the ribosomal stalk which helps the ribosome interact with GTP-bound translation factors. Is thus essential for accurate translation. The chain is Large ribosomal subunit protein bL12 from Liberibacter africanus (Citrus greening disease).